The chain runs to 585 residues: MSNPRKRSIPMRDSNTGLEQLLAEDSFDESDFSEIDDSDNFSDSALEADKIRPLSHLESDGKSSTSSDSGRSMKWSARAMIPRQRYDFTGTPGRKVDVSDITDPLQYFELFFTEELVSKITRETNAQAALLASKPPGPKGFSRMDKWKDTDNDELKVFFAVMLLQGIVQKPELEMFWSTRPLLDTPYLRQIMTGERFLLLFRCLHFVNNSSISAGQSKAQISLQKIKPVFDFLVNKFSTVYTPNRNIAVDESLMLFKGPLAMKQYLPTKRVRFGLKLYVLCESQSGYVWNALVHTGPGMNLKDSADGLKSSRIVLTLVNDLLGQGYCVFLDNFNISPMLFRELHQNRTDAVGTARLNRKQIPNDLKKRIAKGTTVARFCGELMALKWCDGKEVTMLSTFHNDTVIEVNNRNGKKTKRPRVIVDYNENMGAVDSADQMLTSYPSERKRHKVWYKKFFHHLLHITVLNSYILFKKDNPEHTMSHINFRLALIERMLEKHHKPGQQHLRGRPCSDDVTPLRLSGRHFPKSIPATSGKQNPTGRCKICCSQYDKDGKKIRKETRYFCAECDVPLCVVPCFEIYHTKKNY.

Residues Met1–Met73 are disordered. Over residues Asp25 to Asn40 the composition is skewed to acidic residues. Residues Glu47–Gly61 show a composition bias toward basic and acidic residues. Over residues Lys62–Ser72 the composition is skewed to low complexity.

In Homo sapiens (Human), this protein is PiggyBac transposable element-derived protein 4 (PGBD4).